A 207-amino-acid polypeptide reads, in one-letter code: Protein TEX261 homolog (207 aa).

A run of 4 helical transmembrane segments spans residues Phe2 to Leu22, Ile54 to Ile74, Tyr94 to Phe114, and Ile126 to Ala146.

Belongs to the SVP26 family.

The protein resides in the membrane. In Dictyostelium discoideum (Social amoeba), this protein is Protein TEX261 homolog.